Reading from the N-terminus, the 445-residue chain is Histidinol dehydrogenase (445 aa).

The NAD(+) site is built by tyrosine 138, glutamine 199, and asparagine 222. Serine 245, glutamine 267, and histidine 270 together coordinate substrate. The Zn(2+) site is built by glutamine 267 and histidine 270. Active-site proton acceptor residues include glutamate 335 and histidine 336. The substrate site is built by histidine 336, aspartate 369, glutamate 423, and histidine 428. Aspartate 369 contacts Zn(2+). A Zn(2+)-binding site is contributed by histidine 428.

This sequence belongs to the histidinol dehydrogenase family. Zn(2+) is required as a cofactor.

The catalysed reaction is L-histidinol + 2 NAD(+) + H2O = L-histidine + 2 NADH + 3 H(+). Its pathway is amino-acid biosynthesis; L-histidine biosynthesis; L-histidine from 5-phospho-alpha-D-ribose 1-diphosphate: step 9/9. Functionally, catalyzes the sequential NAD-dependent oxidations of L-histidinol to L-histidinaldehyde and then to L-histidine. The sequence is that of Histidinol dehydrogenase from Burkholderia mallei (strain ATCC 23344).